A 251-amino-acid polypeptide reads, in one-letter code: Cyclohexanol dehydrogenase (251 aa).

D42, N95, Y161, K165, I194, and T196 together coordinate NAD(+). Y161 functions as the Proton acceptor in the catalytic mechanism.

The protein belongs to the short-chain dehydrogenases/reductases (SDR) family.

The catalysed reaction is cyclohexanol + NAD(+) = cyclohexanone + NADH + H(+). Catalyzes the oxidation of cyclohexanol to cyclohexanone. Required for the conversion of cyclohexanol to adipic acid. The polypeptide is Cyclohexanol dehydrogenase (Acinetobacter sp. (strain SE19)).